A 513-amino-acid chain; its full sequence is Glutamyl-tRNA(Gln) amidotransferase subunit A (513 aa).

Catalysis depends on charge relay system residues Lys85 and Ser160. Ser184 serves as the catalytic Acyl-ester intermediate.

Belongs to the amidase family. GatA subfamily. In terms of assembly, heterotrimer of A, B and C subunits.

It catalyses the reaction L-glutamyl-tRNA(Gln) + L-glutamine + ATP + H2O = L-glutaminyl-tRNA(Gln) + L-glutamate + ADP + phosphate + H(+). Allows the formation of correctly charged Gln-tRNA(Gln) through the transamidation of misacylated Glu-tRNA(Gln) in organisms which lack glutaminyl-tRNA synthetase. The reaction takes place in the presence of glutamine and ATP through an activated gamma-phospho-Glu-tRNA(Gln). This is Glutamyl-tRNA(Gln) amidotransferase subunit A from Bifidobacterium longum (strain NCC 2705).